A 210-amino-acid polypeptide reads, in one-letter code: Probable glutathione peroxidase 8 (210 aa).

Residues 13–35 (ASRAGLFKVLLSVALCMGSLYLL) traverse the membrane as a helical segment.

It belongs to the glutathione peroxidase family.

The protein resides in the membrane. The enzyme catalyses 2 glutathione + H2O2 = glutathione disulfide + 2 H2O. This Danio rerio (Zebrafish) protein is Probable glutathione peroxidase 8 (gpx8).